Reading from the N-terminus, the 337-residue chain is Vacuolar protein sorting-associated protein 26B-B (337 aa).

Residues 313-337 (RFEGTSHPETRPQHSGAAALEQEHE) form a disordered region.

The protein belongs to the VPS26 family. In terms of assembly, component of the heterotrimeric retromer cargo-selective complex (CSC) which is believed to associate with variable sorting nexins to form functionally distinct retromer complex variants.

It is found in the cytoplasm. It localises to the membrane. Its subcellular location is the endosome. Its function is as follows. Acts as a component of the retromer cargo-selective complex (CSC). The CSC is believed to be the core functional component of retromer or respective retromer complex variants acting to prevent missorting of selected transmembrane cargo proteins into the lysosomal degradation pathway. Retromer mediates retrograde transport of cargo proteins from endosomes to the trans-Golgi network (TGN). This is Vacuolar protein sorting-associated protein 26B-B (vps26b-b) from Xenopus laevis (African clawed frog).